Consider the following 737-residue polypeptide: Polyribonucleotide nucleotidyltransferase (737 aa).

The Mg(2+) site is built by Asp-489 and Asp-495. The KH domain maps to 556-615; that stretch reads PKIDTIKIDVDKIKIVIGKGGETIDKIIAETGVKIDIDEEGNVSIYSSDQDAINRAKEII. The S1 motif domain occupies 625–693; the sequence is DEVYRAKVVR…EKGRIDASMK (69 aa). The segment at 691–737 is disordered; the sequence is SMKALLPRPPKPEHDEKGEKSERPHRPRHHKDHKPKKEFTETPKDSE. The span at 700-714 shows a compositional bias: basic and acidic residues; that stretch reads PKPEHDEKGEKSERP. The segment covering 715–724 has biased composition (basic residues); that stretch reads HRPRHHKDHK. Residues 725 to 737 show a composition bias toward basic and acidic residues; the sequence is PKKEFTETPKDSE.

The protein belongs to the polyribonucleotide nucleotidyltransferase family. Mg(2+) serves as cofactor.

The protein resides in the cytoplasm. It carries out the reaction RNA(n+1) + phosphate = RNA(n) + a ribonucleoside 5'-diphosphate. Its function is as follows. Involved in mRNA degradation. Catalyzes the phosphorolysis of single-stranded polyribonucleotides processively in the 3'- to 5'-direction. This Streptococcus pneumoniae (strain 70585) protein is Polyribonucleotide nucleotidyltransferase.